A 356-amino-acid polypeptide reads, in one-letter code: 3'-5' exonuclease (356 aa).

The interval 1–120 (MDKYLIKMPT…TPSPEKEKPE (120 aa)) is disordered. 2 stretches are compositionally biased toward basic and acidic residues: residues 29-56 (TIDK…ENTP) and 71-85 (KNQD…IKNE). Residues 99–113 (LTRSTRSMAEEGTPS) show a composition bias toward low complexity. Residues serine 105 and serine 113 each carry the phosphoserine modification. In terms of domain architecture, 3'-5' exonuclease spans 155 to 316 (TTLDVVPMAF…GQVIYRDLEQ (162 aa)). Mg(2+)-binding residues include aspartate 165, glutamate 167, and aspartate 303.

The protein belongs to the WRNexo family.

The protein localises to the nucleus. Has exonuclease activity on both single-stranded and duplex templates bearing overhangs, but not blunt ended duplex DNA, and cleaves in a 3'-5' direction. Essential for the formation of DNA replication focal centers. Has an important role in maintaining genome stability. The sequence is that of 3'-5' exonuclease from Drosophila willistoni (Fruit fly).